Reading from the N-terminus, the 1123-residue chain is MADTAAVAKGVENLSVSASKTKELKGTEKRDTLIEIEKRYQQKWEQEGVFEVDAPSTAEFPLDAITPDELRQKHPKFFGTIAYPYMNGRLHAGHAFSFSKIEYHTGFARMQGKRALFPQGYHCTGLPIKASADKLVKEIEMFGQEFERYKEDEVVEGAAPAAAAAPKTKEDLTKFNAKKGKTVAKTGGAKYQFQILKSLGIPVSEIHKFADPQYWLHYFPPECKKDLTNFGARIDWRRQFVTTDANPYYDAFVRWQMNRLLELNKIKFGKRYTIYSIKDGQPCMDHDRSEGEGVLPQEYTALKLKVTEWAPKAAEALKGKLPEGANVYLCPATLRPETMYGQVCCFVGPALKYGVFKAAENEYFVITERAAKNMAYQGIFEKEGVIEKAADIVGSDLIGTLVNAPLSVHKEVYVLPMDTVLATKGTGVVTSVPSDSPDDCAMMTELAKKPEFYGIQKEWAEKEIVSVIKTPTSDLLAPYLVKKLKINSPKDAKQLLEAKELAYKEGFYQGIMNYGDFKGEKVETAKPKVRQQLIDAGDAFAYSEPENKVVSRSGDECSVALMDQWYIDYGEDSWRTVLYDYVENKDGKGINTYYADTQHAFKGVIGWLKQWACARTYGLGSKLPWDPNFLVESLSDSTVYMAYYTVAHWLHRDLFGREKGKGNIGADQMIDEVWDYIFCRTELSDHLVTKSGIPKETLDSMRREFQYFYPLDIRVSGKDLIPNHLTFWLYNHIALFPREYWPKSVRANGHLQLNGEKMSKSTGNFMTLDDVVKKYGADAARVALADAGDGISDSNFVEDVADNTILRFYTNKEWIEETLKDESLRTGELNSFQDALFDNEMNALVNEARKHYEETSYKLALKAAHYDFLNARDMYREACAAAGIPLHKDLVTKYIRLQALVITPIAPHWADYVWQECLGEPKSIQFARWPEVPAANPALTAARDYVRTTSSAINSAEAAQLKKMAKGRQSDFDPKKPKKLTIFATENFPTWQAKYIDLLSEVWDAATGTQKIDDKELNGRIAKMGEMKKAMPFVQALKKRLKDGEPAEQILSRKLSFDEKATLLAMIPGLKRTAGLESVQVVLVEEGSKTGKDLTNGGAEIEVTAPMAEAALPGQPSFFFTNV.

The 'HIGH' region signature appears at 84 to 94 (PYMNGRLHAGH). Residues 757–761 (KMSKS) carry the 'KMSKS' region motif. Lys760 serves as a coordination point for ATP.

It belongs to the class-I aminoacyl-tRNA synthetase family.

The protein resides in the cytoplasm. The catalysed reaction is tRNA(Leu) + L-leucine + ATP = L-leucyl-tRNA(Leu) + AMP + diphosphate. This chain is Leucine--tRNA ligase, cytoplasmic (leu-6), found in Neurospora crassa (strain ATCC 24698 / 74-OR23-1A / CBS 708.71 / DSM 1257 / FGSC 987).